Consider the following 391-residue polypeptide: 4-coumarate--CoA ligase (391 aa).

Belongs to the ATP-dependent AMP-binding enzyme family.

It carries out the reaction (E)-4-coumarate + ATP + CoA = (E)-4-coumaroyl-CoA + AMP + diphosphate. Its function is as follows. Converts p-coumaric acid into p-coumaryl CoA. This is necessary for the activation of the photoactive yellow protein (PYP) chromophore. This chain is 4-coumarate--CoA ligase (pcl), found in Halorhodospira halophila (Ectothiorhodospira halophila).